The following is a 160-amino-acid chain: Ribosome maturation factor RimP (160 aa).

It belongs to the RimP family.

Its subcellular location is the cytoplasm. In terms of biological role, required for maturation of 30S ribosomal subunits. The chain is Ribosome maturation factor RimP from Citrifermentans bemidjiense (strain ATCC BAA-1014 / DSM 16622 / JCM 12645 / Bem) (Geobacter bemidjiensis).